A 158-amino-acid polypeptide reads, in one-letter code: Transcriptional repressor NrdR (158 aa).

A zinc finger spans residues 3–34 (CPSCQNTDSRVLESRAADAGRSVRRRRECLHC). Positions 49-139 (ITVLKRNGNR…VYRDFRGVND (91 aa)) constitute an ATP-cone domain.

This sequence belongs to the NrdR family. It depends on Zn(2+) as a cofactor.

Functionally, negatively regulates transcription of bacterial ribonucleotide reductase nrd genes and operons by binding to NrdR-boxes. This chain is Transcriptional repressor NrdR, found in Prochlorococcus marinus (strain MIT 9313).